Reading from the N-terminus, the 1214-residue chain is MVVSAGPWSSEKAETNILEINEKLRPQLAENKQQFRNLKEKCFVTQLAGFLANRQKKYKYEECKDLIKFMLRNERQFKEEKLAEQLKQAEELRQYKVLVHSQERELTQLREKLREGRDASRSLNQHLQALLTPDKPDKSQGQDLQEQLAEGCRLAQQLFQKLSPENDEDEDEDVQVEEAEKVLESSAPREVQKAEESKVPEDSLEECAITCSNSHSPCDSNQPHKNINITFEEDKVNSTLVVDRESSHDECQDAVNILPVPGPTSSATNVSMVVSAGPLSSEKAEMNILEINEKLHPQLAEKKQQFRNLKEKCFVTQLACFLANQQNKYKYEECKDLIKSMLRNERQFKEEKLAEQLKQAEELRQYKVLVHSQERELTQLREKLREGRDASRSLNQHLQALLTPDKPDKSQGQDLQEQLAEGCRLAQQLFQKLSPENDEDEDEDVQVEEAEKVLESSAPREVQKAEESKVPEDSLEECAITCSNSHGPCDSNQPHKNINITFEEDKVNSALVVDRESSHDECQDAVNILPVPGPTSSATNVSMVVSAGPLSSEKAEMNILEINEKLHPQLAEKKQQFRNLKEKCFVTQLACFLANQQNKYKNEECKDLIKSMLRNERQFKEEKLAEQLKQAEELRQYKVLVHSQERELTQLREKLREGRDASCSLNQHLQALLTPDEPDKSQGQDLQEQLAEGCRLAQHLVQKLSPENDNDDDEDVQVEVAEKVQKSSAPREMPKAEEKEVPEDSLEECAITCSNSHGPYDSNQPHRKTKITFEEDKVDSTLIGSSSHVEWEDAVHIIPENESDDEEEEEKGPVSPRNLQESEEEEVPQESWDEGYSTLSIPPEMLASYKSYSGTFHSLEEQQVCMAVDIGGHRWDQVKKEDQEATGPRLSRELLDEKGPEVLQDSLDRCYSTPSGYLELTDSCQPYRSAFYILEQQRVGWALDMDEIEKYQEVEEDQDPSCPRLSRELLDEKEPEVLQDSLDRCYSTPSGYLELPDLGQPYRSAVYSLEEQYLGLALDVDRIKKDQEEEEDQGPPCPRLSRELLEAVEPEVLQDSLDRCYSTPSSCLEQPDSCLPYGSSFYALEEKHVGFSLDVGEIEKKGKGKKRRGRRSTKKRRRRGRKEGEEDQNPPCPRLSGMLMEVEEPEVLQDSLDRCYSTPSMYFELPDSFQHYRSVFYSFEEQHISFALDVDNRFLTLMGTSLHLVFQMGVIFPQ.

The stretch at Met70–Gln128 forms a coiled coil. The tract at residues Leu162 to Pro200 is disordered. Over residues Glu165–Glu177 the composition is skewed to acidic residues. One can recognise an Olduvai 1 domain in the interval Glu165 to Pro259. Positions Glu190–Pro200 are enriched in basic and acidic residues. The stretch at Asn292–Gln399 forms a coiled coil. The disordered stretch occupies residues Leu433–Pro471. The span at Glu436 to Glu448 shows a compositional bias: acidic residues. One can recognise an Olduvai 2 domain in the interval Glu436–Pro530. The span at Glu461–Pro471 shows a compositional bias: basic and acidic residues. The stretch at Lys610–Gln670 forms a coiled coil. 6 consecutive Olduvai domains span residues Glu707–Pro799, Glu800–Pro888, Ser891–Asp946, Glu947–Pro1038, Ser1041–Lys1114, and Arg1116–Gln1214. Disordered regions lie at residues Glu722 to Leu746 and Trp791 to Ser837. Acidic residues-rich tracts occupy residues Asn801 to Glu810 and Glu821 to Asp833. Residues Gly1102–Arg1121 are compositionally biased toward basic residues. A disordered region spans residues Gly1102 to Ser1136.

The protein belongs to the NBPF family. In terms of tissue distribution, widely expressed. The only tissue which shows a weak expression is kidney.

It is found in the cytoplasm. The polypeptide is NBPF family member NBPF1 (Homo sapiens (Human)).